A 314-amino-acid polypeptide reads, in one-letter code: 4-hydroxy-3-methylbut-2-enyl diphosphate reductase (314 aa).

Position 12 (cysteine 12) interacts with [4Fe-4S] cluster. (2E)-4-hydroxy-3-methylbut-2-enyl diphosphate-binding residues include histidine 41 and histidine 74. The dimethylallyl diphosphate site is built by histidine 41 and histidine 74. Isopentenyl diphosphate-binding residues include histidine 41 and histidine 74. A [4Fe-4S] cluster-binding site is contributed by cysteine 96. Histidine 124 is a (2E)-4-hydroxy-3-methylbut-2-enyl diphosphate binding site. Histidine 124 provides a ligand contact to dimethylallyl diphosphate. Histidine 124 contributes to the isopentenyl diphosphate binding site. The Proton donor role is filled by glutamate 126. Threonine 167 is a binding site for (2E)-4-hydroxy-3-methylbut-2-enyl diphosphate. Residue cysteine 197 participates in [4Fe-4S] cluster binding. (2E)-4-hydroxy-3-methylbut-2-enyl diphosphate-binding residues include serine 225, serine 226, asparagine 227, and serine 269. 4 residues coordinate dimethylallyl diphosphate: serine 225, serine 226, asparagine 227, and serine 269. Positions 225, 226, 227, and 269 each coordinate isopentenyl diphosphate.

This sequence belongs to the IspH family. It depends on [4Fe-4S] cluster as a cofactor.

It carries out the reaction isopentenyl diphosphate + 2 oxidized [2Fe-2S]-[ferredoxin] + H2O = (2E)-4-hydroxy-3-methylbut-2-enyl diphosphate + 2 reduced [2Fe-2S]-[ferredoxin] + 2 H(+). The catalysed reaction is dimethylallyl diphosphate + 2 oxidized [2Fe-2S]-[ferredoxin] + H2O = (2E)-4-hydroxy-3-methylbut-2-enyl diphosphate + 2 reduced [2Fe-2S]-[ferredoxin] + 2 H(+). The protein operates within isoprenoid biosynthesis; dimethylallyl diphosphate biosynthesis; dimethylallyl diphosphate from (2E)-4-hydroxy-3-methylbutenyl diphosphate: step 1/1. Its pathway is isoprenoid biosynthesis; isopentenyl diphosphate biosynthesis via DXP pathway; isopentenyl diphosphate from 1-deoxy-D-xylulose 5-phosphate: step 6/6. Catalyzes the conversion of 1-hydroxy-2-methyl-2-(E)-butenyl 4-diphosphate (HMBPP) into a mixture of isopentenyl diphosphate (IPP) and dimethylallyl diphosphate (DMAPP). Acts in the terminal step of the DOXP/MEP pathway for isoprenoid precursor biosynthesis. This is 4-hydroxy-3-methylbut-2-enyl diphosphate reductase from Actinobacillus succinogenes (strain ATCC 55618 / DSM 22257 / CCUG 43843 / 130Z).